A 251-amino-acid polypeptide reads, in one-letter code: GTP cyclohydrolase 1 type 2 homolog (251 aa).

A divalent metal cation-binding residues include histidine 63, histidine 64, aspartate 101, histidine 219, and glutamate 223.

Belongs to the GTP cyclohydrolase I type 2/NIF3 family. As to quaternary structure, homohexamer.

This is GTP cyclohydrolase 1 type 2 homolog from Pasteurella multocida (strain Pm70).